A 35-amino-acid polypeptide reads, in one-letter code: Phosphoribulokinase (35 aa).

It belongs to the phosphoribulokinase family.

Its subcellular location is the plastid. The protein localises to the chloroplast. It catalyses the reaction D-ribulose 5-phosphate + ATP = D-ribulose 1,5-bisphosphate + ADP + H(+). It functions in the pathway carbohydrate biosynthesis; Calvin cycle. Its activity is regulated as follows. Light regulated via thioredoxin by reversible oxidation/reduction of sulfhydryl/disulfide groups. This is Phosphoribulokinase from Pinus pinaster (Maritime pine).